Reading from the N-terminus, the 467-residue chain is Pachytene checkpoint protein 2 homolog (467 aa).

Glycine 209–threonine 216 provides a ligand contact to ATP.

This sequence belongs to the AAA ATPase family. PCH2 subfamily.

The protein resides in the chromosome. Plays a key role in chromosome recombination during meiosis. Mediates meiotic chromosome remodeling and crossover maturation. The protein is Pachytene checkpoint protein 2 homolog of Arabidopsis thaliana (Mouse-ear cress).